A 198-amino-acid polypeptide reads, in one-letter code: Recombination protein RecR (198 aa).

The C4-type zinc finger occupies Cys-57–Cys-72. The Toprim domain maps to Ser-80–Pro-175.

It belongs to the RecR family.

Its function is as follows. May play a role in DNA repair. It seems to be involved in an RecBC-independent recombinational process of DNA repair. It may act with RecF and RecO. This chain is Recombination protein RecR, found in Bacillus velezensis (strain DSM 23117 / BGSC 10A6 / LMG 26770 / FZB42) (Bacillus amyloliquefaciens subsp. plantarum).